The following is a 417-amino-acid chain: Phosphoglycerate kinase, cytosolic (417 aa).

(2R)-3-phosphoglycerate-binding residues include V23, D24, F25, N26, R39, S61, H62, G64, R65, R132, H168, and R169. Residues G214 and A215 each coordinate ADP. G214 is a CDP binding site. A215 and K216 together coordinate AMP. A215 is a binding site for ATP. A215 is a binding site for Mg(2+). K216 is a (2R)-3-phosphoglycerate binding site. D219 provides a ligand contact to CDP. D219 is a binding site for Mg(2+). Residues K220 and G238 each contribute to the ADP site. K220 provides a ligand contact to AMP. K220 lines the ATP pocket. G238 contacts CDP. Positions 239 and 311 each coordinate AMP. Positions 239 and 311 each coordinate ATP. Residues A311 and N335 each coordinate ADP. G336 and F341 together coordinate CDP. F341, E342, D374, and T375 together coordinate ADP. Residue E342 coordinates AMP. ATP contacts are provided by E342, D374, and T375. D374 serves as a coordination point for Mg(2+).

It belongs to the phosphoglycerate kinase family. Monomer. Mg(2+) is required as a cofactor.

It localises to the cytoplasm. The catalysed reaction is (2R)-3-phosphoglycerate + ATP = (2R)-3-phospho-glyceroyl phosphate + ADP. The protein operates within carbohydrate degradation; glycolysis; pyruvate from D-glyceraldehyde 3-phosphate: step 2/5. The chain is Phosphoglycerate kinase, cytosolic (PGKB) from Leishmania mexicana.